A 265-amino-acid polypeptide reads, in one-letter code: Sulfur carrier protein FdhD (265 aa).

Residue C107 is the Cysteine persulfide intermediate of the active site.

This sequence belongs to the FdhD family.

Its subcellular location is the cytoplasm. Required for formate dehydrogenase (FDH) activity. Acts as a sulfur carrier protein that transfers sulfur from IscS to the molybdenum cofactor prior to its insertion into FDH. This chain is Sulfur carrier protein FdhD, found in Staphylococcus aureus (strain MRSA252).